Here is a 400-residue protein sequence, read N- to C-terminus: Enoyl-[acyl-carrier-protein] reductase [NADH] (400 aa).

NAD(+) contacts are provided by residues 48 to 53 (GSSSGY), 74 to 75 (FE), 111 to 112 (DA), and 139 to 140 (LA). Tyrosine 225 contacts substrate. Tyrosine 235 (proton donor) is an active-site residue. Residues lysine 244 and 273–275 (VVT) contribute to the NAD(+) site.

It belongs to the TER reductase family. As to quaternary structure, monomer.

It catalyses the reaction a 2,3-saturated acyl-[ACP] + NAD(+) = a (2E)-enoyl-[ACP] + NADH + H(+). It functions in the pathway lipid metabolism; fatty acid biosynthesis. Involved in the final reduction of the elongation cycle of fatty acid synthesis (FAS II). Catalyzes the reduction of a carbon-carbon double bond in an enoyl moiety that is covalently linked to an acyl carrier protein (ACP). The chain is Enoyl-[acyl-carrier-protein] reductase [NADH] from Shewanella pealeana (strain ATCC 700345 / ANG-SQ1).